Consider the following 159-residue polypeptide: NADH-quinone oxidoreductase subunit B 2 (159 aa).

[4Fe-4S] cluster-binding residues include Cys-37, Cys-38, Cys-102, and Cys-132.

It belongs to the complex I 20 kDa subunit family. As to quaternary structure, NDH-1 is composed of 14 different subunits. Subunits NuoB, C, D, E, F, and G constitute the peripheral sector of the complex. Requires [4Fe-4S] cluster as cofactor.

Its subcellular location is the cell inner membrane. It carries out the reaction a quinone + NADH + 5 H(+)(in) = a quinol + NAD(+) + 4 H(+)(out). Its function is as follows. NDH-1 shuttles electrons from NADH, via FMN and iron-sulfur (Fe-S) centers, to quinones in the respiratory chain. Couples the redox reaction to proton translocation (for every two electrons transferred, four hydrogen ions are translocated across the cytoplasmic membrane), and thus conserves the redox energy in a proton gradient. The protein is NADH-quinone oxidoreductase subunit B 2 of Azoarcus sp. (strain BH72).